The chain runs to 34 residues: Photosystem II reaction center protein T (34 aa).

A helical membrane pass occupies residues 3 to 23; the sequence is ALVYTFLLVSTLGIIFFAIFF.

It belongs to the PsbT family. As to quaternary structure, PSII is composed of 1 copy each of membrane proteins PsbA, PsbB, PsbC, PsbD, PsbE, PsbF, PsbH, PsbI, PsbJ, PsbK, PsbL, PsbM, PsbT, PsbY, PsbZ, Psb30/Ycf12, at least 3 peripheral proteins of the oxygen-evolving complex and a large number of cofactors. It forms dimeric complexes.

Its subcellular location is the plastid. The protein resides in the chloroplast thylakoid membrane. Its function is as follows. Found at the monomer-monomer interface of the photosystem II (PS II) dimer, plays a role in assembly and dimerization of PSII. PSII is a light-driven water plastoquinone oxidoreductase, using light energy to abstract electrons from H(2)O, generating a proton gradient subsequently used for ATP formation. This is Photosystem II reaction center protein T from Solanum lycopersicum (Tomato).